The primary structure comprises 220 residues: Deoxyribose-phosphate aldolase 1 (220 aa).

D89 (proton donor/acceptor) is an active-site residue. The active-site Schiff-base intermediate with acetaldehyde is the K151. The active-site Proton donor/acceptor is K180.

Belongs to the DeoC/FbaB aldolase family. DeoC type 1 subfamily.

It is found in the cytoplasm. It catalyses the reaction 2-deoxy-D-ribose 5-phosphate = D-glyceraldehyde 3-phosphate + acetaldehyde. Its pathway is carbohydrate degradation; 2-deoxy-D-ribose 1-phosphate degradation; D-glyceraldehyde 3-phosphate and acetaldehyde from 2-deoxy-alpha-D-ribose 1-phosphate: step 2/2. In terms of biological role, catalyzes a reversible aldol reaction between acetaldehyde and D-glyceraldehyde 3-phosphate to generate 2-deoxy-D-ribose 5-phosphate. This is Deoxyribose-phosphate aldolase 1 from Mesoplasma florum (strain ATCC 33453 / NBRC 100688 / NCTC 11704 / L1) (Acholeplasma florum).